A 274-amino-acid chain; its full sequence is MEHIEILKAIFLGIVEGITEWLPISSTGHMILVNEFIRLNVTEAFKQVFLVVIQLGAILSVVLLYFNKLIPFSLNGGFYLKKDVVSMWIKIIISCIPATIVGIPFDDKIDALFYNYQTVSITLISFGILFIMIENHNKGKHPRITSISEITYTTAVLIGIFQLIAAVFPGTSRSGATIVGALLIGVSRTVAAEYTFFLAIPVMFGASLLKLFKFGLHFTSTEITILFIGMLSAFIVSILAIKFLMIYIKRHDFKAFGWYRIILGCAVLVYFLIV.

7 helical membrane passes run 47–67, 85–105, 113–133, 150–170, 196–216, 225–245, and 253–273; these read QVFL…LYFN, VSMW…GIPF, FYNY…FIMI, ITYT…VFPG, FFLA…KFGL, ILFI…KFLM, and FKAF…YFLI.

Belongs to the UppP family.

It localises to the cell membrane. It catalyses the reaction di-trans,octa-cis-undecaprenyl diphosphate + H2O = di-trans,octa-cis-undecaprenyl phosphate + phosphate + H(+). Functionally, catalyzes the dephosphorylation of undecaprenyl diphosphate (UPP). Confers resistance to bacitracin. This is Undecaprenyl-diphosphatase 1 from Clostridium acetobutylicum (strain ATCC 824 / DSM 792 / JCM 1419 / IAM 19013 / LMG 5710 / NBRC 13948 / NRRL B-527 / VKM B-1787 / 2291 / W).